A 346-amino-acid chain; its full sequence is UDP-3-O-acylglucosamine N-acyltransferase (346 aa).

His-253 functions as the Proton acceptor in the catalytic mechanism.

The protein belongs to the transferase hexapeptide repeat family. LpxD subfamily. In terms of assembly, homotrimer.

The catalysed reaction is a UDP-3-O-[(3R)-3-hydroxyacyl]-alpha-D-glucosamine + a (3R)-hydroxyacyl-[ACP] = a UDP-2-N,3-O-bis[(3R)-3-hydroxyacyl]-alpha-D-glucosamine + holo-[ACP] + H(+). The protein operates within bacterial outer membrane biogenesis; LPS lipid A biosynthesis. Its function is as follows. Catalyzes the N-acylation of UDP-3-O-acylglucosamine using 3-hydroxyacyl-ACP as the acyl donor. Is involved in the biosynthesis of lipid A, a phosphorylated glycolipid that anchors the lipopolysaccharide to the outer membrane of the cell. The polypeptide is UDP-3-O-acylglucosamine N-acyltransferase (Rickettsia felis (strain ATCC VR-1525 / URRWXCal2) (Rickettsia azadi)).